We begin with the raw amino-acid sequence, 155 residues long: Ribosome maturation factor RimP (155 aa).

The protein belongs to the RimP family.

Its subcellular location is the cytoplasm. In terms of biological role, required for maturation of 30S ribosomal subunits. The protein is Ribosome maturation factor RimP of Listeria monocytogenes serovar 1/2a (strain ATCC BAA-679 / EGD-e).